The following is a 367-amino-acid chain: Cobalt-precorrin-5B C(1)-methyltransferase (367 aa).

This sequence belongs to the CbiD family.

It carries out the reaction Co-precorrin-5B + S-adenosyl-L-methionine = Co-precorrin-6A + S-adenosyl-L-homocysteine. Its pathway is cofactor biosynthesis; adenosylcobalamin biosynthesis; cob(II)yrinate a,c-diamide from sirohydrochlorin (anaerobic route): step 6/10. Functionally, catalyzes the methylation of C-1 in cobalt-precorrin-5B to form cobalt-precorrin-6A. This chain is Cobalt-precorrin-5B C(1)-methyltransferase, found in Thermosynechococcus vestitus (strain NIES-2133 / IAM M-273 / BP-1).